A 159-amino-acid polypeptide reads, in one-letter code: NADH-quinone oxidoreductase subunit B (159 aa).

[4Fe-4S] cluster-binding residues include C32, C33, C97, and C126.

This sequence belongs to the complex I 20 kDa subunit family. NDH-1 is composed of 14 different subunits. Subunits NuoB, C, D, E, F, and G constitute the peripheral sector of the complex. The cofactor is [4Fe-4S] cluster.

The protein localises to the cell inner membrane. It catalyses the reaction a quinone + NADH + 5 H(+)(in) = a quinol + NAD(+) + 4 H(+)(out). In terms of biological role, NDH-1 shuttles electrons from NADH, via FMN and iron-sulfur (Fe-S) centers, to quinones in the respiratory chain. The immediate electron acceptor for the enzyme in this species is believed to be ubiquinone. Couples the redox reaction to proton translocation (for every two electrons transferred, four hydrogen ions are translocated across the cytoplasmic membrane), and thus conserves the redox energy in a proton gradient. This Helicobacter pylori (strain J99 / ATCC 700824) (Campylobacter pylori J99) protein is NADH-quinone oxidoreductase subunit B.